Consider the following 636-residue polypeptide: Threonine--tRNA ligase (636 aa).

Residues 1 to 63 enclose the TGS domain; it reads MINITTSFPN…SKDGSVDPVT (63 aa). The interval 244-535 is catalytic; the sequence is DHRKIAKDLG…LIEHYAGNIP (292 aa). Zn(2+)-binding residues include C335, H386, and H512.

This sequence belongs to the class-II aminoacyl-tRNA synthetase family. In terms of assembly, homodimer. Zn(2+) serves as cofactor.

The protein localises to the cytoplasm. It carries out the reaction tRNA(Thr) + L-threonine + ATP = L-threonyl-tRNA(Thr) + AMP + diphosphate + H(+). Its function is as follows. Catalyzes the attachment of threonine to tRNA(Thr) in a two-step reaction: L-threonine is first activated by ATP to form Thr-AMP and then transferred to the acceptor end of tRNA(Thr). Also edits incorrectly charged L-seryl-tRNA(Thr). The chain is Threonine--tRNA ligase from Anaplasma marginale (strain Florida).